A 237-amino-acid polypeptide reads, in one-letter code: Ribonuclease PH (237 aa).

Residues Arg-86 and 124–126 each bind phosphate; that span reads GTR.

It belongs to the RNase PH family. In terms of assembly, homohexameric ring arranged as a trimer of dimers.

It catalyses the reaction tRNA(n+1) + phosphate = tRNA(n) + a ribonucleoside 5'-diphosphate. In terms of biological role, phosphorolytic 3'-5' exoribonuclease that plays an important role in tRNA 3'-end maturation. Removes nucleotide residues following the 3'-CCA terminus of tRNAs; can also add nucleotides to the ends of RNA molecules by using nucleoside diphosphates as substrates, but this may not be physiologically important. Probably plays a role in initiation of 16S rRNA degradation (leading to ribosome degradation) during starvation. The protein is Ribonuclease PH of Shewanella loihica (strain ATCC BAA-1088 / PV-4).